The sequence spans 994 residues: Sarcoplasmic/endoplasmic reticulum calcium ATPase 1 (994 aa).

Over 1–48 the chain is Cytoplasmic; the sequence is MEAAHSKSTEECLSYFGVSETTGLTPDQVKRHLEKYGPNELPAEEGKS. The helical transmembrane segment at 49–69 threads the bilayer; that stretch reads LWELVVEQFEDLLVRILLLAA. Over 70–89 the chain is Lumenal; the sequence is CISFVLAWFEEGEETVTAFV. A helical transmembrane segment spans residues 90–110; sequence EPFVILLILIANAIVGVWQER. The Cytoplasmic portion of the chain corresponds to 111–253; that stretch reads NAENAIEALK…QDKTPLQQKL (143 aa). Residues 254 to 273 form a helical membrane-spanning segment; the sequence is DEFGEQLSKVISLICVAVWL. Over 274 to 295 the chain is Lumenal; it reads INIGHFNDPVHGGSWFRGAIYY. A helical transmembrane segment spans residues 296-313; the sequence is FKIAVALAVAAIPEGLPA. Positions 304, 305, 307, and 309 each coordinate Ca(2+). Residues 314–757 lie on the Cytoplasmic side of the membrane; sequence VITTCLALGT…EEGRAIYNNM (444 aa). Aspartate 351 (4-aspartylphosphate intermediate) is an active-site residue. Mg(2+) contacts are provided by aspartate 351 and threonine 353. Threonine 353 contributes to the ATP binding site. Threonine 441 is modified (phosphothreonine). Residues glutamate 442, arginine 489, lysine 515, and arginine 560 each coordinate ATP. Threonine 569 is modified (phosphothreonine). Serine 581 is subject to Phosphoserine. Threonine 625, glycine 626, and aspartate 627 together coordinate ATP. The residue at position 643 (serine 643) is a Phosphoserine. The ATP site is built by arginine 678 and lysine 684. Residue aspartate 703 participates in Mg(2+) binding. Asparagine 706 is an ATP binding site. Residues 758–777 form a helical membrane-spanning segment; sequence KQFIRYLISSNVGEVVCIFL. Asparagine 768 and glutamate 771 together coordinate Ca(2+). Over 778–787 the chain is Lumenal; that stretch reads TAALGLPEAL. The chain crosses the membrane as a helical span at residues 788–808; that stretch reads IPVQLLWVNLVTDGLPATALG. Residues 788 to 808 are interaction with PLN; that stretch reads IPVQLLWVNLVTDGLPATALG. Ca(2+) contacts are provided by asparagine 796, threonine 799, and aspartate 800. Residues 809–828 are Cytoplasmic-facing; it reads FNPPDLDIMDRPPRSPKEPL. Residues 829 to 851 form a helical membrane-spanning segment; it reads ISGWLFFRYMAIGGYVGAATVGA. Residues 852 to 897 are Lumenal-facing; it reads AAWWFLYAEDGPHVSYHQLTHFMQCTEHNPEFDGLDCEVFEAPEPM. Residues cysteine 876 and cysteine 888 are joined by a disulfide bond. Residues 898–917 form a helical membrane-spanning segment; that stretch reads TMALSVLVTIEMCNALNSLS. Position 908 (glutamate 908) interacts with Ca(2+). The Cytoplasmic segment spans residues 918–930; it reads ENQSLLRMPPWVN. A helical transmembrane segment spans residues 931–949; the sequence is IWLLGSICLSMSLHFLILY. An interaction with PLN region spans residues 932–943; sequence WLLGSICLSMSL. Over 950–964 the chain is Lumenal; that stretch reads VDPLPMIFKLRALDF. The chain crosses the membrane as a helical span at residues 965–985; it reads TQWLMVLKISLPVIGLDELLK. Over 986 to 994 the chain is Cytoplasmic; the sequence is FIARNYLEG.

This sequence belongs to the cation transport ATPase (P-type) (TC 3.A.3) family. Type IIA subfamily. Interacts with sarcolipin (SLN). Interacts with phospholamban (PLN). Interacts with myoregulin (MRLN). Interacts with DWORF. Interacts with VMP1. Mg(2+) is required as a cofactor.

The protein resides in the endoplasmic reticulum membrane. The protein localises to the sarcoplasmic reticulum membrane. The catalysed reaction is Ca(2+)(in) + ATP + H2O = Ca(2+)(out) + ADP + phosphate + H(+). Inhibited by sarcolipin (SLN) and myoregulin (MRLN). Has also been shown to be reversibly inhibited by phospholamban (PLN) at low calcium concentrations in vitro. Dephosphorylated PLN decreases the apparent affinity of the ATPase for calcium in vitro and this inhibition is regulated by the phosphorylation of PLN. Enhanced by DWORF; DWORF increases activity by displacing sarcolipin (SLN), phospholamban (PLN) and myoregulin (MRLN). In terms of biological role, key regulator of striated muscle performance by acting as the major Ca(2+) ATPase responsible for the reuptake of cytosolic Ca(2+) into the sarcoplasmic reticulum. Catalyzes the hydrolysis of ATP coupled with the translocation of calcium from the cytosol to the sarcoplasmic reticulum lumen. Contributes to calcium sequestration involved in muscular excitation/contraction. The polypeptide is Sarcoplasmic/endoplasmic reticulum calcium ATPase 1 (Atp2a1) (Mus musculus (Mouse)).